Here is a 624-residue protein sequence, read N- to C-terminus: Probable potassium transport system protein Kup (624 aa).

The next 12 helical transmembrane spans lie at Ala-16–Tyr-36, Ile-59–Val-79, Phe-106–Pro-126, Phe-147–Thr-167, Phe-174–Ile-194, Leu-211–Thr-231, Trp-252–Ile-272, Ile-292–Gly-312, Ile-342–Phe-362, Ala-371–Val-391, Thr-394–Ala-414, and Thr-418–Met-438.

This sequence belongs to the HAK/KUP transporter (TC 2.A.72) family.

The protein localises to the cell membrane. The enzyme catalyses K(+)(in) + H(+)(in) = K(+)(out) + H(+)(out). Its function is as follows. Transport of potassium into the cell. Likely operates as a K(+):H(+) symporter. The protein is Probable potassium transport system protein Kup of Corynebacterium glutamicum (strain ATCC 13032 / DSM 20300 / JCM 1318 / BCRC 11384 / CCUG 27702 / LMG 3730 / NBRC 12168 / NCIMB 10025 / NRRL B-2784 / 534).